The following is a 142-amino-acid chain: Low molecular weight protein-tyrosine-phosphatase Ptp (142 aa).

The Nucleophile role is filled by Cys10. Arg16 is an active-site residue. Residue Asp115 is the Proton donor of the active site.

It belongs to the low molecular weight phosphotyrosine protein phosphatase family.

It carries out the reaction O-phospho-L-tyrosyl-[protein] + H2O = L-tyrosyl-[protein] + phosphate. It participates in glycan metabolism; exopolysaccharide biosynthesis. Inhibited by ammonium molybdate, sodium orthovanadate, N-ethylmaleimide and iodoacetic acid. Dephosphorylates ptk. May be involved in the production and the transport of exopolysaccharides. The protein is Low molecular weight protein-tyrosine-phosphatase Ptp (ptp) of Acinetobacter johnsonii.